The chain runs to 352 residues: C-C chemokine receptor type 5 (352 aa).

The Extracellular portion of the chain corresponds to 1–30; sequence MDYQVSSPTYDIDYYTSEPCQKINVKQIAA. Y3 is modified (sulfotyrosine). O-linked (GalNAc...) serine glycans are attached at residues S6 and S7. Y10, Y14, and Y15 each carry sulfotyrosine. 2 disulfides stabilise this stretch: C20-C269 and C101-C178. The chain crosses the membrane as a helical span at residues 31–58; that stretch reads RLLPPLYSLVFIFGFVGNILVVLILINC. Residues 59–68 lie on the Cytoplasmic side of the membrane; it reads KRLKSMTDIY. The chain crosses the membrane as a helical span at residues 69–89; that stretch reads LLNLAISDLLFLLTVPFWAHY. The Extracellular segment spans residues 90–102; that stretch reads AAAQWDFGNTMCQ. The chain crosses the membrane as a helical span at residues 103–124; that stretch reads LLTGLYFIGFFSGIFFIILLTI. Topologically, residues 125-141 are cytoplasmic; it reads DRYLAIVHAVFALKART. The helical transmembrane segment at 142–166 threads the bilayer; sequence VTFGVVTSVITWVVAVFASLPGIIF. The Extracellular portion of the chain corresponds to 167-198; that stretch reads TRSQREGLHYTCSSHFPYSQYQFWKNFQTLKI. The chain crosses the membrane as a helical span at residues 199-218; the sequence is VILGLVLPLLVMVICYSGIL. At 219–235 the chain is on the cytoplasmic side; it reads KTLLRCRNEKKRHRAVR. A helical transmembrane segment spans residues 236–260; sequence LIFTIMIVYFLFWAPYNIVLLLNTF. Residues 261–277 lie on the Extracellular side of the membrane; that stretch reads QEFFGLNNCSSSNRLDQ. Residues 278–301 traverse the membrane as a helical segment; the sequence is AMQVTETLGMTHCCINPIIYAFVG. Topologically, residues 302-352 are cytoplasmic; sequence EKFRNYLLVFFQKHIAKRFCKCCSIFQQEAPERASSVYTRSTGEQEISVGL. S-palmitoyl cysteine attachment occurs at residues C321, C323, and C324. Phosphoserine; by BARK1 is present on residues S336, S337, S342, and S349.

The protein belongs to the G-protein coupled receptor 1 family. Interacts with PRAF2. Efficient ligand binding to CCL3/MIP-1alpha and CCL4/MIP-1beta requires sulfation, O-glycosylation and sialic acid modifications. Glycosylation on Ser-6 is required for efficient binding of CCL4. Interacts with GRK2. Interacts with ARRB1 and ARRB2. Interacts with CNIH4. Interacts with S100A4; this interaction stimulates T-lymphocyte chemotaxis. In terms of processing, sulfated on at least 2 of the N-terminal tyrosines. Sulfation is required for efficient binding of the chemokines, CCL3 and CCL4. Palmitoylation in the C-terminal is important for cell surface expression. Post-translationally, phosphorylation on serine residues in the C-terminal is stimulated by binding CC chemokines especially by APO-RANTES. In terms of processing, O-glycosylated, but not N-glycosylated. Ser-6 appears to be the major site even if Ser-7 may be also O-glycosylated. Also sialylated glycans present which contribute to chemokine binding. Thr-16 and Ser-17 may also be glycosylated and, if so, with small moieties such as a T-antigen.

The protein resides in the cell membrane. Its function is as follows. Receptor for a number of inflammatory CC-chemokines including CCL3/MIP-1-alpha, CCL4/MIP-1-beta and RANTES and subsequently transduces a signal by increasing the intracellular calcium ion level. May play a role in the control of granulocytic lineage proliferation or differentiation. Participates in T-lymphocyte migration to the infection site by acting as a chemotactic receptor. The sequence is that of C-C chemokine receptor type 5 (CCR5) from Papio anubis (Olive baboon).